We begin with the raw amino-acid sequence, 257 residues long: Ribonuclease HII (257 aa).

The region spanning 71–257 (SLIAGIDEVG…TSFEPIKSML (187 aa)) is the RNase H type-2 domain. Positions 77, 78, and 172 each coordinate a divalent metal cation.

Belongs to the RNase HII family. Mn(2+) is required as a cofactor. It depends on Mg(2+) as a cofactor.

The protein resides in the cytoplasm. It carries out the reaction Endonucleolytic cleavage to 5'-phosphomonoester.. Endonuclease that specifically degrades the RNA of RNA-DNA hybrids. This is Ribonuclease HII from Streptococcus uberis (strain ATCC BAA-854 / 0140J).